Reading from the N-terminus, the 612-residue chain is Proton channel OTOP1 (612 aa).

Residues 1–46 show a composition bias toward low complexity; that stretch reads MLEGLGSPASPRAAASASVAGSSGPAACSPPSSSAPRSPESPAPRR. The interval 1–50 is disordered; sequence MLEGLGSPASPRAAASASVAGSSGPAACSPPSSSAPRSPESPAPRRGGVR. Residues 1-58 lie on the Cytoplasmic side of the membrane; that stretch reads MLEGLGSPASPRAAASASVAGSSGPAACSPPSSSAPRSPESPAPRRGGVRASVPQKLA. The chain crosses the membrane as a helical span at residues 59 to 80; the sequence is EMLSSQYGLIVFVAGLLLLLAW. Residues 81-88 are Extracellular-facing; it reads AVHAAGVS. A helical transmembrane segment spans residues 89–112; sequence KSDLLCFLTALMLLQLLWMLWYVG. Residues 113 to 130 lie on the Cytoplasmic side of the membrane; it reads RSSAHRRLFRLKDTHAGA. A helical membrane pass occupies residues 131–153; the sequence is GWLRGSITLFAVITVILGCLKIG. Residues 154–163 lie on the Extracellular side of the membrane; sequence YFIGFSECLS. Residues 164-188 traverse the membrane as a helical segment; it reads ATEGVFPVTHSVHTLLQVYFLWGHA. The Cytoplasmic portion of the chain corresponds to 189–196; sequence KDIIQSFK. Residues 197 to 223 form a helical membrane-spanning segment; it reads TLERFGVIHSVFTNLLLWANGVLNESK. The Extracellular portion of the chain corresponds to 224-264; sequence HQLNEHKERLITLGFGNITTVLDDHTPQCNCTPPTLCTAIS. The helical transmembrane segment at 265-290 threads the bilayer; that stretch reads HGIYYLYPFNIEYQILASTMLYVLWK. The Cytoplasmic portion of the chain corresponds to 291–311; that stretch reads NIGRKVDSHQHQKMQFKSDGV. Residues 312-334 form a helical membrane-spanning segment; sequence MVGAVLGLTVLAATIAVVVVYLI. Residues 335 to 344 lie on the Extracellular side of the membrane; the sequence is HIGRSKTKSE. Residues 345 to 370 form a helical membrane-spanning segment; that stretch reads SALIMFYLYAITLLMLMGAAGLAGIR. The Cytoplasmic segment spans residues 371–388; it reads IYRIDEKSLDESKNPARK. A helical membrane pass occupies residues 389-413; the sequence is LDSDLLVGTASGSWLISWGSILAIL. Residues 414-423 lie on the Extracellular side of the membrane; that stretch reads CAEGHPRYTW. The helical transmembrane segment at 424-444 threads the bilayer; the sequence is YNLPYSILAIVEKYIQNLFIF. Residues 445–544 are Cytoplasmic-facing; the sequence is ESIHREPEKL…QGNAKRKVLR (100 aa). A disordered region spans residues 499 to 525; that stretch reads ANGNVCMRESHDKEEEKQEESSWGGSP. Residues 506 to 518 are compositionally biased toward basic and acidic residues; that stretch reads RESHDKEEEKQEE. Residues 545 to 563 traverse the membrane as a helical segment; it reads NIAAFLFLCNISLWIPPAF. At 564 to 581 the chain is on the extracellular side; that stretch reads GCRPEYDNGLEEIVFGFE. The helical transmembrane segment at 582-605 threads the bilayer; sequence PWIIVVNLAMPFSIFYRMHAAASL. Residues 606–612 are Cytoplasmic-facing; sequence FEVYCKI.

It belongs to the otopetrin family. Homodimer. Interacts with STAT1, independently of STAT1 phosphorylation status.

It is found in the cell membrane. The protein resides in the cell projection. Its subcellular location is the microvillus. The enzyme catalyses H(+)(in) = H(+)(out). Activated by both acid and alkali, with proton influx in response to extracellular acid and proton efflux during alkali stimulation. Inhibited by Zn(2+); this inhibition is thought to be pH-sensitive. Currents evoked in response to mild acid (pH 6.0) stimulus may also be mildly potentiated by exposure to Zn(2+). Activated by NH(4)Cl. Proton-selective ion channel. Biphasically modulated by acid and alkali, mediating proton influx and efflux in response to extracellular acid and base stimulation, respectively. Sour taste receptor, which carries inward currents in response to extracellular acidification. Sensor for ammonium chloride (NH(4)Cl) in taste receptor cells. NH(4)Cl acts by increasing the intracellular pH, thereby generating a driving force for proton entry through OTOP1 channel. Might also participate in alkaline sensation. Plays a role in the regulation of Ca(2+) flux in response to purigenic (ATP, ADP and UDP) stimuli, leading to increase in cytosolic Ca(2+) due to influx of extracellular calcium. May play this role by inhibiting P2Y purinoceptor-mediated Ca(2+) release in a Ca(2+)-dependent manner and promote an influx of Ca(2+) in response to ATP. Through this mechanism and possibly others, plays a role in the formation and function of calcium carbonate-based structures in the vestibular system of the inner ear, called otoconia, that sense gravity and linear acceleration. In obesity, may attenuate adipose tissue inflammation, through the negative regulation of IFNG signaling, hence may play an adaptive role in the maintainance of metabolic homeostasis. Following alkali activation, may also be permeable Na(+), K(+), Cs(+) and Li(+). This Homo sapiens (Human) protein is Proton channel OTOP1.